The primary structure comprises 240 residues: Fatty acid metabolism regulator protein (240 aa).

The region spanning 6-74 (KGPASFAEKY…HGKPTRVNNF (69 aa)) is the HTH gntR-type domain. Residues 34–53 (ERELSELIGVTRTTLREVLQ) constitute a DNA-binding region (H-T-H motif).

As to quaternary structure, homodimer.

The protein localises to the cytoplasm. Its function is as follows. Multifunctional regulator of fatty acid metabolism. The sequence is that of Fatty acid metabolism regulator protein from Shewanella amazonensis (strain ATCC BAA-1098 / SB2B).